We begin with the raw amino-acid sequence, 143 residues long: Transcriptional regulator MraZ (143 aa).

SpoVT-AbrB domains are found at residues 5-47 (EYSH…PMPV) and 76-119 (AMEA…SDEN).

This sequence belongs to the MraZ family. Forms oligomers.

The protein resides in the cytoplasm. The protein localises to the nucleoid. This Leuconostoc citreum (strain KM20) protein is Transcriptional regulator MraZ.